A 93-amino-acid polypeptide reads, in one-letter code: Integration host factor subunit beta (93 aa).

This sequence belongs to the bacterial histone-like protein family. As to quaternary structure, heterodimer of an alpha and a beta chain.

In terms of biological role, this protein is one of the two subunits of integration host factor, a specific DNA-binding protein that functions in genetic recombination as well as in transcriptional and translational control. This chain is Integration host factor subunit beta, found in Cereibacter sphaeroides (strain KD131 / KCTC 12085) (Rhodobacter sphaeroides).